We begin with the raw amino-acid sequence, 188 residues long: GMP synthase [glutamine-hydrolyzing] subunit A (188 aa).

The Glutamine amidotransferase type-1 domain maps to 1 to 188 (MIVIMDNGGQ…RNFAKLCGEL (188 aa)). C78 acts as the Nucleophile in catalysis. Residues H165 and E167 contribute to the active site.

Heterodimer composed of a glutamine amidotransferase subunit (A) and a GMP-binding subunit (B).

It catalyses the reaction XMP + L-glutamine + ATP + H2O = GMP + L-glutamate + AMP + diphosphate + 2 H(+). Its pathway is purine metabolism; GMP biosynthesis; GMP from XMP (L-Gln route): step 1/1. In terms of biological role, catalyzes the synthesis of GMP from XMP. This Pyrococcus abyssi (strain GE5 / Orsay) protein is GMP synthase [glutamine-hydrolyzing] subunit A.